Reading from the N-terminus, the 120-residue chain is Large ribosomal subunit protein uL18 (120 aa).

The protein belongs to the universal ribosomal protein uL18 family. As to quaternary structure, part of the 50S ribosomal subunit; part of the 5S rRNA/L5/L18/L25 subcomplex. Contacts the 5S and 23S rRNAs.

Its function is as follows. This is one of the proteins that bind and probably mediate the attachment of the 5S RNA into the large ribosomal subunit, where it forms part of the central protuberance. This Lawsonia intracellularis (strain PHE/MN1-00) protein is Large ribosomal subunit protein uL18.